The chain runs to 423 residues: UDP-N-acetylglucosamine 1-carboxyvinyltransferase 2 (423 aa).

23 to 24 is a phosphoenolpyruvate binding site; that stretch reads KN. UDP-N-acetyl-alpha-D-glucosamine is bound at residue arginine 93. Cysteine 117 (proton donor) is an active-site residue. A 2-(S-cysteinyl)pyruvic acid O-phosphothioketal modification is found at cysteine 117. Residues 122–126, aspartate 305, and isoleucine 327 each bind UDP-N-acetyl-alpha-D-glucosamine; that span reads RPIDQ.

This sequence belongs to the EPSP synthase family. MurA subfamily.

It is found in the cytoplasm. It catalyses the reaction phosphoenolpyruvate + UDP-N-acetyl-alpha-D-glucosamine = UDP-N-acetyl-3-O-(1-carboxyvinyl)-alpha-D-glucosamine + phosphate. It functions in the pathway cell wall biogenesis; peptidoglycan biosynthesis. Its function is as follows. Cell wall formation. Adds enolpyruvyl to UDP-N-acetylglucosamine. This is UDP-N-acetylglucosamine 1-carboxyvinyltransferase 2 from Listeria innocua serovar 6a (strain ATCC BAA-680 / CLIP 11262).